The chain runs to 493 residues: Argininosuccinate lyase (493 aa).

The protein belongs to the lyase 1 family. Argininosuccinate lyase subfamily.

It is found in the cytoplasm. The catalysed reaction is 2-(N(omega)-L-arginino)succinate = fumarate + L-arginine. It participates in amino-acid biosynthesis; L-arginine biosynthesis; L-arginine from L-ornithine and carbamoyl phosphate: step 3/3. The sequence is that of Argininosuccinate lyase from Methanospirillum hungatei JF-1 (strain ATCC 27890 / DSM 864 / NBRC 100397 / JF-1).